The following is a 189-amino-acid chain: Peptidyl-tRNA hydrolase (189 aa).

Tyr15 serves as a coordination point for tRNA. The Proton acceptor role is filled by His20. TRNA is bound by residues Phe66, Asn68, and Asn114.

It belongs to the PTH family. As to quaternary structure, monomer.

Its subcellular location is the cytoplasm. The catalysed reaction is an N-acyl-L-alpha-aminoacyl-tRNA + H2O = an N-acyl-L-amino acid + a tRNA + H(+). Its function is as follows. Hydrolyzes ribosome-free peptidyl-tRNAs (with 1 or more amino acids incorporated), which drop off the ribosome during protein synthesis, or as a result of ribosome stalling. Functionally, catalyzes the release of premature peptidyl moieties from peptidyl-tRNA molecules trapped in stalled 50S ribosomal subunits, and thus maintains levels of free tRNAs and 50S ribosomes. This chain is Peptidyl-tRNA hydrolase, found in Streptococcus pneumoniae (strain Taiwan19F-14).